A 360-amino-acid chain; its full sequence is D-alanine--D-alanine ligase (360 aa).

Positions 149-353 (KKLMAAEGLP…YEELLDVLVQ (205 aa)) constitute an ATP-grasp domain. 176-231 (KNLLGLPVFVKPARGGSSIGISRVTAWEDFNKAVGLARAHDEKVIVESEIVGSEVE) serves as a coordination point for ATP. Residues aspartate 308, glutamate 320, and asparagine 322 each coordinate Mg(2+).

The protein belongs to the D-alanine--D-alanine ligase family. It depends on Mg(2+) as a cofactor. The cofactor is Mn(2+).

It is found in the cytoplasm. It carries out the reaction 2 D-alanine + ATP = D-alanyl-D-alanine + ADP + phosphate + H(+). Its pathway is cell wall biogenesis; peptidoglycan biosynthesis. Functionally, cell wall formation. The sequence is that of D-alanine--D-alanine ligase from Corynebacterium glutamicum (strain R).